Here is a 493-residue protein sequence, read N- to C-terminus: Lysostaphin (493 aa).

Residues 1 to 23 form the signal peptide; the sequence is MKKTKNNYYTRPLAIGLSTFALA. Positions 24–247 are excised as a propeptide; that stretch reads SIVYGGIQNE…ALVQNRTALR (224 aa). Repeat copies occupy residues 49–61, 62–74, 75–87, 88–100, 101–113, 114–126, 127–139, 140–152, 153–165, 166–178, 179–191, 192–204, 205–217, and 218–230. Residues 49 to 243 are 15 X 13 AA approximate tandem repeats of A-E-V-E-T-S-K-A-P-V-E-N-T; it reads AEVETSKAPV…ETSKALVQNR (195 aa). A disordered region spans residues 52-232; the sequence is ETSKAPVENT…SKAPVENTAE (181 aa). The 15; approximate repeat unit spans residues 231-243; it reads AEVETSKALVQNR. Zn(2+) is bound by residues His-279 and Asp-283. Residue His-360 is part of the active site. Residue His-362 coordinates Zn(2+). The 69-residue stretch at 413-481 folds into the SH3b domain; sequence SESASFTPNT…YLPVRTWNKS (69 aa).

The protein belongs to the peptidase M23B family. In terms of assembly, monomer. The cofactor is Zn(2+).

The protein localises to the secreted. The catalysed reaction is Hydrolysis of the -Gly-|-Gly- bond in the pentaglycine inter-peptide link joining staphylococcal cell wall peptidoglycans.. Its function is as follows. Lyses staphylococcal cells by hydrolyzing the polyglycine interpeptide bridges of the peptidoglycan. In Staphylococcus simulans, this protein is Lysostaphin (lss).